Reading from the N-terminus, the 98-residue chain is HssA/B-like protein 34 (98 aa).

2 disordered regions span residues 1–26 and 60–98; these read MTLF…SFGS and AKSS…SCSC. Over residues 60–72 the composition is skewed to gly residues; the sequence is AKSSGGSCGGKGG. A compositionally biased stretch (basic residues) spans 73-88; that stretch reads SHNHGHGHGHGPHGHG. The span at 89–98 shows a compositional bias: gly residues; it reads GKGSGGSCSC.

This sequence belongs to the hssA/B family.

The polypeptide is HssA/B-like protein 34 (hssl34) (Dictyostelium discoideum (Social amoeba)).